The chain runs to 221 residues: Cytidylate kinase 1 (221 aa).

7-15 is an ATP binding site; it reads GPSASGKSS.

This sequence belongs to the cytidylate kinase family. Type 1 subfamily.

It localises to the cytoplasm. It carries out the reaction CMP + ATP = CDP + ADP. It catalyses the reaction dCMP + ATP = dCDP + ADP. In Borrelia garinii subsp. bavariensis (strain ATCC BAA-2496 / DSM 23469 / PBi) (Borreliella bavariensis), this protein is Cytidylate kinase 1.